Here is a 365-residue protein sequence, read N- to C-terminus: Terpene cyclase 4 (365 aa).

Residues 1 to 11 are compositionally biased toward pro residues; that stretch reads MVPSLITPPPS. The interval 1–20 is disordered; the sequence is MVPSLITPPPSRSGEATPQK. Residues Asp118, Asn260, and Ser264 each contribute to the Mg(2+) site. Residues 118 to 122 carry the D(D/E)XX(D/E) motif motif; that stretch reads DDPFD. Positions 260 to 268 match the NSE motif motif; that stretch reads NDLCSYRKD. Positions 341–348 match the WxxxxxRY motif motif; sequence WSLYTFRY. 2 residues coordinate (2E,6E)-farnesyl diphosphate: Arg347 and Tyr348.

The protein belongs to the terpene synthase family. Homodimer. Mg(2+) serves as cofactor.

It catalyses the reaction (2E,6E)-farnesyl diphosphate + H2O = koraiol + diphosphate. Its pathway is sesquiterpene biosynthesis. Terpene cyclase that catalyzes the cyclization of farnesyl diphosphate (FPP) to the sesquiterpene koraiol. This chain is Terpene cyclase 4, found in Gibberella fujikuroi (strain CBS 195.34 / IMI 58289 / NRRL A-6831) (Bakanae and foot rot disease fungus).